A 155-amino-acid chain; its full sequence is Small ribosomal subunit protein uS7c (155 aa).

It belongs to the universal ribosomal protein uS7 family. In terms of assembly, part of the 30S ribosomal subunit.

Its subcellular location is the plastid. It is found in the chloroplast. In terms of biological role, one of the primary rRNA binding proteins, it binds directly to 16S rRNA where it nucleates assembly of the head domain of the 30S subunit. This is Small ribosomal subunit protein uS7c (rps7) from Staurastrum punctulatum (Green alga).